The sequence spans 316 residues: Taste receptor type 2 member 3 (316 aa).

Residues 1-7 (MFGFIEG) are Extracellular-facing. Residues 8–28 (VFLVLTITEFILGNLVNGFIV) form a helical membrane-spanning segment. Over 29–50 (SINSSYWFKSKKISLSNFIITS) the chain is Cytoplasmic. Residues 51–71 (LALFRIFLLWIIFIDSLIIVF) form a helical membrane-spanning segment. At 72 to 86 (SYQTHDSGIMMQLID) the chain is on the extracellular side. A helical membrane pass occupies residues 87-107 (VFWTFTNHFSIWLISCLSVFY). Over 108 to 128 (CLKIASFSHPSFLWLKWRASR) the chain is Cytoplasmic. A helical membrane pass occupies residues 129-149 (VVVGMLWGALLLSCVSTMSLM). The Extracellular segment spans residues 150-186 (NEFKIYSALTRSKDTPNMTEYIRLKRQEYNLMHVLGN). A glycan (N-linked (GlcNAc...) asparagine) is linked at N166. Residues 187–207 (LWKIPSLIVSLVAYLLLLLSL) traverse the membrane as a helical segment. Topologically, residues 208-234 (GKHTQQMQQYSIDSRDQSAEAHKRAMR) are cytoplasmic. The chain crosses the membrane as a helical span at residues 235–255 (IISSFLLFFLFYFLSFMILSS). Topologically, residues 256–266 (SRFLPETRIAR) are extracellular. The helical transmembrane segment at 267–287 (IIGVVISMSYLVGDSFILIVC) threads the bilayer. Residues 288 to 316 (NNKLKHTFVAMLPCECGHLKPGSKGPSAS) lie on the Cytoplasmic side of the membrane.

The protein belongs to the G-protein coupled receptor T2R family.

It is found in the membrane. Gustducin-coupled receptor implicated in the perception of bitter compounds in the oral cavity and the gastrointestinal tract. Signals through PLCB2 and the calcium-regulated cation channel TRPM5. The chain is Taste receptor type 2 member 3 (Tas2r3) from Mus musculus (Mouse).